The sequence spans 264 residues: Apolipoprotein A-I (264 aa).

A signal peptide spans 1–18 (MKAVVLALAVLFLTGSQA). Repeat copies occupy residues 67–88 (LHLL…EQLG) and 89–110 (PVTH…QEMN). The interval 67–264 (LHLLDNWDTL…DEASKKLNAQ (198 aa)) is 10 X approximate tandem repeats. A Methionine sulfoxide modification is found at M109. The 3; half-length repeat unit spans residues 111–121 (KDLEEVKVKVQ). 5 repeat units span residues 122–143 (PYLD…EKVG), 144–165 (PLGA…EKLT), 166–187 (PLGE…TQLA), 188–207 (PYSD…IRDS), and 208–229 (PSLA…EKAK). Residues 230–240 (PALEDLRQGLM) form a 9; half-length repeat. Residues 241–264 (PVLENLKTTVLAAIDEASKKLNAQ) form repeat 10.

Belongs to the apolipoprotein A1/A4/E family. Homodimer. Interacts with APOA1BP and CLU. Component of a sperm activating protein complex (SPAP), consisting of APOA1, an immunoglobulin heavy chain, an immunoglobulin light chain and albumin. Interacts with NDRG1. Interacts with SCGB3A2. Interacts with NAXE and YJEFN3. Post-translationally, glycosylated. In terms of processing, palmitoylated. Phosphorylation sites are present in the extracellular medium.

The protein localises to the secreted. In terms of biological role, participates in the reverse transport of cholesterol from tissues to the liver for excretion by promoting cholesterol efflux from tissues and by acting as a cofactor for the lecithin cholesterol acyltransferase (LCAT). As part of the SPAP complex, activates spermatozoa motility. The sequence is that of Apolipoprotein A-I (APOA1) from Jaculus jaculus (Lesser Egyptian jerboa).